The following is a 1066-amino-acid chain: Ribosomal protein S6 kinase delta-1 (1066 aa).

Residues 8–132 form the PX domain; the sequence is SADLARFYTV…DFFKGGIIND (125 aa). The interval 207-228 is disordered; it reads VASDSEQSKTEEERESRSLFPG. Basic and acidic residues predominate over residues 212–223; sequence EQSKTEEERESR. The region spanning 277 to 305 is the MIT domain; the sequence is VQGESSPTRREAVKRRTAEYLMRAESISS. Residues Ser282, Ser423, Ser427, Ser449, and Ser455 each carry the phosphoserine modification. One can recognise a Protein kinase 1 domain in the interval 344–445; sequence GVIDKVLLVM…PTLAKVHLQQ (102 aa). The segment at 441–509 is disordered; it reads VHLQQPTSSP…SGSSSEEECT (69 aa). Residues 448-458 show a composition bias toward low complexity; it reads SSPQDSSSFES. Over residues 474–483 the composition is skewed to polar residues; the sequence is SSLTPSSQDD. A compositionally biased stretch (low complexity) spans 492 to 503; that stretch reads DSSPKWPDSGSS. Phosphoserine is present on residues Ser494, Ser528, Ser583, Ser605, Ser608, Ser640, Ser661, Ser664, Ser667, and Ser794. Positions 553-596 are disordered; it reads HLAADSDSPSTQLRAHELKFFPNDDPEAVSSPRTSDSLSRSKNS. Residues 582–593 show a composition bias toward low complexity; it reads SSPRTSDSLSRS. The Protein kinase 2 domain maps to 794–1056; sequence SSDPKFQGLG…VEDIKSHPFF (263 aa). ATP contacts are provided by residues 801 to 809 and Arg820; that span reads GLGVVESAV. The residue at position 872 (Ser872) is a Phosphoserine. The Proton acceptor role is filled by Asp929.

The protein belongs to the protein kinase superfamily. Ser/Thr protein kinase family. S6 kinase subfamily. In terms of assembly, interacts with SPHK1 and phosphatidylinositol 3-phosphate. Interacts (via PX domain) with PRDX3. In terms of tissue distribution, highly expressed in testis, skeletal muscle, brain, heart, placenta, kidney and liver and weakly expressed in thymus, small intestine, lung and colon.

Its subcellular location is the cytoplasm. The protein localises to the membrane. It localises to the early endosome. It catalyses the reaction L-seryl-[protein] + ATP = O-phospho-L-seryl-[protein] + ADP + H(+). The enzyme catalyses L-threonyl-[protein] + ATP = O-phospho-L-threonyl-[protein] + ADP + H(+). Its function is as follows. May be involved in transmitting sphingosine-1 phosphate (SPP)-mediated signaling into the cell. Plays a role in the recruitment of PRDX3 to early endosomes. In Homo sapiens (Human), this protein is Ribosomal protein S6 kinase delta-1 (RPS6KC1).